The primary structure comprises 262 residues: Ribose-5-phosphate isomerase A (262 aa).

Substrate is bound by residues 33-36 (TGST), 89-92 (DGAD), and 102-105 (KGGG). The active-site Proton acceptor is the E111. K129 contributes to the substrate binding site.

This sequence belongs to the ribose 5-phosphate isomerase family. In terms of assembly, homodimer.

It carries out the reaction aldehydo-D-ribose 5-phosphate = D-ribulose 5-phosphate. The protein operates within carbohydrate degradation; pentose phosphate pathway; D-ribose 5-phosphate from D-ribulose 5-phosphate (non-oxidative stage): step 1/1. Its function is as follows. Catalyzes the reversible conversion of ribose-5-phosphate to ribulose 5-phosphate. The chain is Ribose-5-phosphate isomerase A from Cereibacter sphaeroides (strain KD131 / KCTC 12085) (Rhodobacter sphaeroides).